We begin with the raw amino-acid sequence, 125 residues long: Fluoride-specific ion channel FluC (125 aa).

The next 4 helical transmembrane spans lie at 6-26 (VLVM…GLGI), 35-55 (FLFG…GLFA), 66-86 (LLLL…ALSI), and 100-120 (AMGY…AGYL). Na(+) is bound by residues Gly-76 and Thr-79.

Belongs to the fluoride channel Fluc/FEX (TC 1.A.43) family.

The protein localises to the cell inner membrane. It catalyses the reaction fluoride(in) = fluoride(out). With respect to regulation, na(+) is not transported, but it plays an essential structural role and its presence is essential for fluoride channel function. Fluoride-specific ion channel. Important for reducing fluoride concentration in the cell, thus reducing its toxicity. This is Fluoride-specific ion channel FluC from Gloeobacter violaceus (strain ATCC 29082 / PCC 7421).